Reading from the N-terminus, the 236-residue chain is MPRKHLIASGINKKQQQQAKIWMKCAKEIKAAAKMGGPNPEANPRLKVAIERALNNNLSRDSIERNINGASKDADNLKELTYEGYGPNGLAIIVRALTDNEQRTISAVRGYFSKLQGQIAKPNSVSMLFNEYGQLLIDKKTKTLDEWFELLVDQDIVDINEDDEIIEILVQPKDFSATKLILENNNANIQSAEIKLIPTDFISLDDHARERLVRFVNACENDDDISWVITNYEEEL.

The protein belongs to the TACO1 family.

The protein localises to the cytoplasm. The chain is Probable transcriptional regulatory protein UUR10_0292 from Ureaplasma urealyticum serovar 10 (strain ATCC 33699 / Western).